The sequence spans 337 residues: Glyceraldehyde-3-phosphate dehydrogenase (337 aa).

NAD(+) is bound by residues 13 to 14 (RI), Asp35, and Arg80. D-glyceraldehyde 3-phosphate-binding positions include 150–152 (SCT), Thr181, 210–211 (TG), and Arg233. Cys151 (nucleophile) is an active-site residue. Residue Asn315 participates in NAD(+) binding.

This sequence belongs to the glyceraldehyde-3-phosphate dehydrogenase family. Homotetramer.

It localises to the cytoplasm. The catalysed reaction is D-glyceraldehyde 3-phosphate + phosphate + NAD(+) = (2R)-3-phospho-glyceroyl phosphate + NADH + H(+). Its pathway is carbohydrate degradation; glycolysis; pyruvate from D-glyceraldehyde 3-phosphate: step 1/5. This chain is Glyceraldehyde-3-phosphate dehydrogenase (GPDA), found in Colletotrichum lindemuthianum (Bean anthracnose fungus).